The primary structure comprises 309 residues: MELQFLGTGAGQPSKARNVSSLVLKLLDEINEVWMFDCGEGTQRQILETTIKPRKVKKIFITHMHGDHIFGLPGFLASRSFQSSEEQTDLEVYGPVGIKQYVMTSIRTSGTRLSYHVHFKEIDENSLGLVMEDDKFAVYADKLDHTIFCVGYRVVQKDLEGTLDAEALKAAGVPFGPLFGQIKNGQDVVLEDGTKIIAKDFISAPKKGKVITILGDTRKTNASVRLGLGADVLVHESTYGKGDEKIAKSHGHSTNMQAAQVARDASAKRLLLNHVSARFLGRDIGKMAADAKTIFENTHIVRDLEEVEI.

Zn(2+) contacts are provided by histidine 63, histidine 65, aspartate 67, histidine 68, histidine 145, aspartate 216, and histidine 274. Aspartate 67 serves as the catalytic Proton acceptor.

It belongs to the RNase Z family. As to quaternary structure, homodimer. Requires Zn(2+) as cofactor.

It carries out the reaction Endonucleolytic cleavage of RNA, removing extra 3' nucleotides from tRNA precursor, generating 3' termini of tRNAs. A 3'-hydroxy group is left at the tRNA terminus and a 5'-phosphoryl group is left at the trailer molecule.. Its function is as follows. Zinc phosphodiesterase, which displays some tRNA 3'-processing endonuclease activity. Probably involved in tRNA maturation, by removing a 3'-trailer from precursor tRNA. The polypeptide is Ribonuclease Z (Streptococcus thermophilus (strain CNRZ 1066)).